The chain runs to 462 residues: L-seryl-tRNA(Sec) selenium transferase (462 aa).

Lysine 292 is subject to N6-(pyridoxal phosphate)lysine.

It belongs to the SelA family. It depends on pyridoxal 5'-phosphate as a cofactor.

The protein localises to the cytoplasm. The enzyme catalyses L-seryl-tRNA(Sec) + selenophosphate + H(+) = L-selenocysteinyl-tRNA(Sec) + phosphate. Its pathway is aminoacyl-tRNA biosynthesis; selenocysteinyl-tRNA(Sec) biosynthesis; selenocysteinyl-tRNA(Sec) from L-seryl-tRNA(Sec) (bacterial route): step 1/1. Converts seryl-tRNA(Sec) to selenocysteinyl-tRNA(Sec) required for selenoprotein biosynthesis. In Geotalea uraniireducens (strain Rf4) (Geobacter uraniireducens), this protein is L-seryl-tRNA(Sec) selenium transferase.